The sequence spans 57 residues: Large ribosomal subunit protein bL32 (57 aa).

A disordered region spans residues 1–20 (MAVQQRRVSKSRKGMRRSHD). The span at 7-19 (RVSKSRKGMRRSH) shows a compositional bias: basic residues.

It belongs to the bacterial ribosomal protein bL32 family.

This chain is Large ribosomal subunit protein bL32, found in Ureaplasma urealyticum serovar 10 (strain ATCC 33699 / Western).